The chain runs to 541 residues: Tyrosine-protein phosphatase non-receptor type 5 (541 aa).

A disordered region spans residues 1 to 55 (MCCSERLLGLPQPVEMEAPDEAEGLPSKQKEMPPPPPPSPPSEPAQKLPPQGAGS). Positions 32 to 43 (MPPPPPPSPPSE) are enriched in pro residues. 2 helical membrane-spanning segments follow: residues 64-84 (LCLF…LSGH) and 122-142 (LLLV…WHLL). S221 is subject to Phosphoserine; by PKA. At T231 the chain carries Phosphothreonine; by MAPK. A Phosphoserine; by MAPK modification is found at S244. The Tyrosine-protein phosphatase domain occupies 276–531 (LQAEFFEIPM…QFVHHAMSLY (256 aa)). Residues D437, 472–478 (CSAGIGR), and Q516 contribute to the substrate site. C472 acts as the Phosphocysteine intermediate in catalysis.

It belongs to the protein-tyrosine phosphatase family. Non-receptor class subfamily. Phosphorylation at Ser-221 by PKA deactivates PTPN5. Phosphorylation at Thr-231 and Ser-244 by MAPKs stabilizes the phosphatase, dephosphorylation of these sites results in ubiquitin-mediated degradation of the active phosphatase. STEP20 is expressed only in the CNS.

Its subcellular location is the endoplasmic reticulum membrane. It localises to the cytoplasm. It catalyses the reaction O-phospho-L-tyrosyl-[protein] + H2O = L-tyrosyl-[protein] + phosphate. Its function is as follows. May regulate the activity of several effector molecules involved in synaptic plasticity and neuronal cell survival, including MAPKs, Src family kinases and NMDA receptors. The chain is Tyrosine-protein phosphatase non-receptor type 5 (Ptpn5) from Mus musculus (Mouse).